The following is a 244-amino-acid chain: Krueppel-like factor 9 (244 aa).

A disordered region spans residues 80 to 142; that stretch reads SVCSDSLESP…AKGKHASEKR (63 aa). S122 bears the Phosphoserine mark. C2H2-type zinc fingers lie at residues 143-167, 173-197, and 203-225; these read HKCP…YRVH, FPCT…YRTH, and FRCP…ARRH.

Belongs to the Sp1 C2H2-type zinc-finger protein family. In terms of assembly, interacts with ZZEF1. Epidermis (at protein level).

It localises to the nucleus. Its function is as follows. Transcription factor that binds to GC box promoter elements. Selectively activates mRNA synthesis from genes containing tandem repeats of GC boxes but represses genes with a single GC box. Acts as an epidermal circadian transcription factor regulating keratinocyte proliferation. This chain is Krueppel-like factor 9 (KLF9), found in Homo sapiens (Human).